Here is a 358-residue protein sequence, read N- to C-terminus: Methionine aminopeptidase 2 (358 aa).

His-109 provides a ligand contact to substrate. Asp-130, Asp-141, and His-210 together coordinate a divalent metal cation. His-218 contacts substrate. 2 residues coordinate a divalent metal cation: Glu-243 and Glu-339.

Belongs to the peptidase M24A family. Methionine aminopeptidase eukaryotic type 2 subfamily. Requires Co(2+) as cofactor. The cofactor is Zn(2+). Mn(2+) is required as a cofactor. Fe(2+) serves as cofactor.

The protein resides in the cytoplasm. The catalysed reaction is Release of N-terminal amino acids, preferentially methionine, from peptides and arylamides.. Cotranslationally removes the N-terminal methionine from nascent proteins. The N-terminal methionine is often cleaved when the second residue in the primary sequence is small and uncharged (Met-Ala-, Cys, Gly, Pro, Ser, Thr, or Val). The chain is Methionine aminopeptidase 2 from Encephalitozoon cuniculi (strain GB-M1) (Microsporidian parasite).